We begin with the raw amino-acid sequence, 315 residues long: Ribose-phosphate pyrophosphokinase (315 aa).

Residues 37 to 39 (DGE) and 96 to 97 (RQ) contribute to the ATP site. Mg(2+) contacts are provided by histidine 131 and aspartate 170. Lysine 194 is a catalytic residue. Residues arginine 196, aspartate 220, and 224–228 (DTGGT) each bind D-ribose 5-phosphate.

This sequence belongs to the ribose-phosphate pyrophosphokinase family. Class I subfamily. Homohexamer. It depends on Mg(2+) as a cofactor.

It localises to the cytoplasm. It catalyses the reaction D-ribose 5-phosphate + ATP = 5-phospho-alpha-D-ribose 1-diphosphate + AMP + H(+). It functions in the pathway metabolic intermediate biosynthesis; 5-phospho-alpha-D-ribose 1-diphosphate biosynthesis; 5-phospho-alpha-D-ribose 1-diphosphate from D-ribose 5-phosphate (route I): step 1/1. Its function is as follows. Involved in the biosynthesis of the central metabolite phospho-alpha-D-ribosyl-1-pyrophosphate (PRPP) via the transfer of pyrophosphoryl group from ATP to 1-hydroxyl of ribose-5-phosphate (Rib-5-P). This Buchnera aphidicola subsp. Schizaphis graminum (strain Sg) protein is Ribose-phosphate pyrophosphokinase.